Here is a 334-residue protein sequence, read N- to C-terminus: Glycerol-3-phosphate dehydrogenase [NAD(P)+] (334 aa).

NADPH-binding residues include S14, Y15, R35, and K109. Sn-glycerol 3-phosphate contacts are provided by K109, G138, and T140. Residue A142 coordinates NADPH. 5 residues coordinate sn-glycerol 3-phosphate: K194, D247, S257, R258, and N259. K194 (proton acceptor) is an active-site residue. R258 contributes to the NADPH binding site. 2 residues coordinate NADPH: V282 and E284.

This sequence belongs to the NAD-dependent glycerol-3-phosphate dehydrogenase family.

It is found in the cytoplasm. It catalyses the reaction sn-glycerol 3-phosphate + NAD(+) = dihydroxyacetone phosphate + NADH + H(+). The catalysed reaction is sn-glycerol 3-phosphate + NADP(+) = dihydroxyacetone phosphate + NADPH + H(+). It functions in the pathway membrane lipid metabolism; glycerophospholipid metabolism. Catalyzes the reduction of the glycolytic intermediate dihydroxyacetone phosphate (DHAP) to sn-glycerol 3-phosphate (G3P), the key precursor for phospholipid synthesis. This Colwellia psychrerythraea (strain 34H / ATCC BAA-681) (Vibrio psychroerythus) protein is Glycerol-3-phosphate dehydrogenase [NAD(P)+].